A 419-amino-acid chain; its full sequence is Tyrosine--tRNA ligase (419 aa).

Position 36 (Tyr36) interacts with L-tyrosine. A 'HIGH' region motif is present at residues 41–50; sequence PTGDSMHIGH. The L-tyrosine site is built by Tyr168 and Gln172. The 'KMSKS' region motif lies at 230-234; that stretch reads KFGKT. Lys233 is a binding site for ATP. Residues 352–419 form the S4 RNA-binding domain; the sequence is KNIVDFLVDA…KKKYFLARVK (68 aa).

Belongs to the class-I aminoacyl-tRNA synthetase family. TyrS type 1 subfamily. Homodimer.

The protein localises to the cytoplasm. It catalyses the reaction tRNA(Tyr) + L-tyrosine + ATP = L-tyrosyl-tRNA(Tyr) + AMP + diphosphate + H(+). Catalyzes the attachment of tyrosine to tRNA(Tyr) in a two-step reaction: tyrosine is first activated by ATP to form Tyr-AMP and then transferred to the acceptor end of tRNA(Tyr). This chain is Tyrosine--tRNA ligase, found in Latilactobacillus sakei subsp. sakei (strain 23K) (Lactobacillus sakei subsp. sakei).